We begin with the raw amino-acid sequence, 372 residues long: Queuine tRNA-ribosyltransferase (372 aa).

Asp89 (proton acceptor) is an active-site residue. Substrate-binding positions include 89–93, Asp143, Gln185, and Gly212; that span reads DSGGF. The RNA binding stretch occupies residues 243 to 249; sequence GVGKPED. Asp262 acts as the Nucleophile in catalysis. The tract at residues 267-271 is RNA binding; important for wobble base 34 recognition; the sequence is TRNAR. The Zn(2+) site is built by Cys300, Cys302, Cys305, and His331.

Belongs to the queuine tRNA-ribosyltransferase family. As to quaternary structure, homodimer. Within each dimer, one monomer is responsible for RNA recognition and catalysis, while the other monomer binds to the replacement base PreQ1. It depends on Zn(2+) as a cofactor.

It catalyses the reaction 7-aminomethyl-7-carbaguanine + guanosine(34) in tRNA = 7-aminomethyl-7-carbaguanosine(34) in tRNA + guanine. It participates in tRNA modification; tRNA-queuosine biosynthesis. In terms of biological role, catalyzes the base-exchange of a guanine (G) residue with the queuine precursor 7-aminomethyl-7-deazaguanine (PreQ1) at position 34 (anticodon wobble position) in tRNAs with GU(N) anticodons (tRNA-Asp, -Asn, -His and -Tyr). Catalysis occurs through a double-displacement mechanism. The nucleophile active site attacks the C1' of nucleotide 34 to detach the guanine base from the RNA, forming a covalent enzyme-RNA intermediate. The proton acceptor active site deprotonates the incoming PreQ1, allowing a nucleophilic attack on the C1' of the ribose to form the product. After dissociation, two additional enzymatic reactions on the tRNA convert PreQ1 to queuine (Q), resulting in the hypermodified nucleoside queuosine (7-(((4,5-cis-dihydroxy-2-cyclopenten-1-yl)amino)methyl)-7-deazaguanosine). In Chromohalobacter salexigens (strain ATCC BAA-138 / DSM 3043 / CIP 106854 / NCIMB 13768 / 1H11), this protein is Queuine tRNA-ribosyltransferase.